An 874-amino-acid chain; its full sequence is Leucine--tRNA ligase (874 aa).

A 'HIGH' region motif is present at residues 47 to 57; sequence PYPSGKLHMGH. The 'KMSKS' region signature appears at 636–640; sequence KMSKS. ATP is bound at residue Lys-639.

The protein belongs to the class-I aminoacyl-tRNA synthetase family.

The protein resides in the cytoplasm. The catalysed reaction is tRNA(Leu) + L-leucine + ATP = L-leucyl-tRNA(Leu) + AMP + diphosphate. The sequence is that of Leucine--tRNA ligase from Acinetobacter baumannii (strain SDF).